The following is a 250-amino-acid chain: UPF0259 membrane protein PC1_1998 (250 aa).

6 consecutive transmembrane segments (helical) span residues Phe-20–Ala-40, Phe-90–Val-110, Leu-132–Ile-152, Leu-156–Phe-176, Ala-192–Ser-212, and Leu-222–Phe-242.

This sequence belongs to the UPF0259 family.

The protein localises to the cell inner membrane. The polypeptide is UPF0259 membrane protein PC1_1998 (Pectobacterium carotovorum subsp. carotovorum (strain PC1)).